Consider the following 213-residue polypeptide: Dimethylamine corrinoid protein 1 (213 aa).

The region spanning 1-90 is the B12-binding N-terminal domain; that stretch reads MSKEELLQEL…LMPEGSASSK (90 aa). Residues 91 to 213 form the B12-binding domain; that stretch reads MGVIVNGTVE…AVAKAKELLA (123 aa). His-104 lines the methylcob(III)alamin pocket.

Belongs to the methylamine corrinoid protein family.

It participates in one-carbon metabolism; methanogenesis from dimethylamine. Its function is as follows. Acts as a methyl group carrier between MtbB and MtbA. This Methanosarcina acetivorans (strain ATCC 35395 / DSM 2834 / JCM 12185 / C2A) protein is Dimethylamine corrinoid protein 1 (mtbC1).